A 160-amino-acid chain; its full sequence is SsrA-binding protein (160 aa).

The interval 131–160 is disordered; the sequence is KKEYDKRDTERERDAGRELQRAVRNKGKED.

Belongs to the SmpB family.

The protein localises to the cytoplasm. Its function is as follows. Required for rescue of stalled ribosomes mediated by trans-translation. Binds to transfer-messenger RNA (tmRNA), required for stable association of tmRNA with ribosomes. tmRNA and SmpB together mimic tRNA shape, replacing the anticodon stem-loop with SmpB. tmRNA is encoded by the ssrA gene; the 2 termini fold to resemble tRNA(Ala) and it encodes a 'tag peptide', a short internal open reading frame. During trans-translation Ala-aminoacylated tmRNA acts like a tRNA, entering the A-site of stalled ribosomes, displacing the stalled mRNA. The ribosome then switches to translate the ORF on the tmRNA; the nascent peptide is terminated with the 'tag peptide' encoded by the tmRNA and targeted for degradation. The ribosome is freed to recommence translation, which seems to be the essential function of trans-translation. This is SsrA-binding protein from Pseudomonas fluorescens (strain Pf0-1).